A 449-amino-acid polypeptide reads, in one-letter code: N-succinylarginine dihydrolase (449 aa).

Substrate contacts are provided by residues 19 to 28 (GGLSYGNVAS), asparagine 110, and 137 to 138 (HR). The segment at 23–43 (YGNVASQSNSQQASNPREAAR) is disordered. The segment covering 27 to 37 (ASQSNSQQASN) has biased composition (low complexity). Residue glutamate 174 is part of the active site. Substrate is bound at residue arginine 214. Residue histidine 250 is part of the active site. 2 residues coordinate substrate: aspartate 252 and asparagine 365. Cysteine 371 acts as the Nucleophile in catalysis.

The protein belongs to the succinylarginine dihydrolase family. As to quaternary structure, homodimer.

The enzyme catalyses N(2)-succinyl-L-arginine + 2 H2O + 2 H(+) = N(2)-succinyl-L-ornithine + 2 NH4(+) + CO2. The protein operates within amino-acid degradation; L-arginine degradation via AST pathway; L-glutamate and succinate from L-arginine: step 2/5. In terms of biological role, catalyzes the hydrolysis of N(2)-succinylarginine into N(2)-succinylornithine, ammonia and CO(2). This is N-succinylarginine dihydrolase from Pseudomonas putida (strain ATCC 700007 / DSM 6899 / JCM 31910 / BCRC 17059 / LMG 24140 / F1).